Here is a 624-residue protein sequence, read N- to C-terminus: Chaperone protein HtpG (624 aa).

The interval 1–336 (MKGQETRGFQ…SSDLPLNVSR (336 aa)) is a; substrate-binding. The tract at residues 337-552 (EILQDSTVTR…ADEMSTQMAK (216 aa)) is b. A c region spans residues 553–624 (LFAAAGQKVP…IRRMNQLLVS (72 aa)).

This sequence belongs to the heat shock protein 90 family. In terms of assembly, homodimer.

Its subcellular location is the cytoplasm. Its function is as follows. Molecular chaperone. Has ATPase activity. This Shigella flexneri protein is Chaperone protein HtpG.